Reading from the N-terminus, the 280-residue chain is Large ribosomal subunit protein uL2 (280 aa).

2 disordered regions span residues 1–59 and 223–280; these read MAIR…GGHK and GVVM…NKKR. Residues 23–33 are compositionally biased toward basic and acidic residues; the sequence is ELTRSTPEKSL. 2 stretches are compositionally biased toward basic residues: residues 36–59 and 269–280; these read PLHK…GGHK and VRRRRSNKNKKR.

It belongs to the universal ribosomal protein uL2 family. Part of the 50S ribosomal subunit. Forms a bridge to the 30S subunit in the 70S ribosome.

One of the primary rRNA binding proteins. Required for association of the 30S and 50S subunits to form the 70S ribosome, for tRNA binding and peptide bond formation. It has been suggested to have peptidyltransferase activity; this is somewhat controversial. Makes several contacts with the 16S rRNA in the 70S ribosome. This Corynebacterium kroppenstedtii (strain DSM 44385 / JCM 11950 / CIP 105744 / CCUG 35717) protein is Large ribosomal subunit protein uL2.